A 136-amino-acid polypeptide reads, in one-letter code: Nucleoside diphosphate kinase (136 aa).

ATP is bound by residues K10, F58, R86, T92, R104, and N114. Catalysis depends on H117, which acts as the Pros-phosphohistidine intermediate.

The protein belongs to the NDK family. In terms of assembly, homotetramer. The cofactor is Mg(2+).

It is found in the cytoplasm. The enzyme catalyses a 2'-deoxyribonucleoside 5'-diphosphate + ATP = a 2'-deoxyribonucleoside 5'-triphosphate + ADP. The catalysed reaction is a ribonucleoside 5'-diphosphate + ATP = a ribonucleoside 5'-triphosphate + ADP. Functionally, major role in the synthesis of nucleoside triphosphates other than ATP. The ATP gamma phosphate is transferred to the NDP beta phosphate via a ping-pong mechanism, using a phosphorylated active-site intermediate. The chain is Nucleoside diphosphate kinase from Mycobacterium marinum (strain ATCC BAA-535 / M).